Here is a 1440-residue protein sequence, read N- to C-terminus: Bridge-like lipid transfer protein family member 3A (1440 aa).

Residues 3-95 (GIIKKQILKH…KVEVEMKTCE (93 aa)) enclose the Chorein N-terminal domain. 3 disordered regions span residues 267–307 (SAHQ…NSSS), 430–456 (ADSL…FQPP), and 751–780 (KPSA…TEHD). Positions 287-307 (SAQQSWAQAFGGSQGNSNSSS) are enriched in low complexity. 4 positions are modified to phosphoserine: Ser444, Ser446, Ser755, and Ser758. Residues 837–860 (ALLRLKEVLQRLQEQLTKDTESMT) adopt a coiled-coil conformation. Residues 891-1008 (VDADSAGSDS…ETAVNGQGEL (118 aa)) are disordered. Residues 911–920 (SEDRELKSDA) show a composition bias toward basic and acidic residues. Residues 985–995 (ASSSPAALKPP) show a composition bias toward low complexity. 3 positions are modified to phosphoserine: Ser988, Ser1103, and Ser1106. The disordered stretch occupies residues 1106-1180 (SFDGVSLDSS…SPAANSSVSP (75 aa)). The span at 1134 to 1150 (LLESESGPESVPPGSLS) shows a compositional bias: low complexity. The span at 1151–1180 (NVSDNAGVQGSPLVNNYGQGSPAANSSVSP) shows a compositional bias: polar residues. Residues 1401–1435 (KELPILQKELIETKQALANANQDKEKLLQEIRKYN) adopt a coiled-coil conformation.

As to quaternary structure, homodimer (Potential). Interacts with UHRF1.

Its subcellular location is the late endosome. Functionally, tube-forming lipid transport protein which probably mediates the transfer of lipids between membranes at organelle contact sites. May be involved in the retrograde traffic of vesicle clusters in the endocytic pathway to the Golgi complex. The protein is Bridge-like lipid transfer protein family member 3A of Homo sapiens (Human).